Consider the following 520-residue polypeptide: 2-isopropylmalate synthase (520 aa).

In terms of domain architecture, Pyruvate carboxyltransferase spans 5–267; it reads VIIFDTTLRD…HTNINHQEIY (263 aa). Residues Asp14, His202, His204, and Asn238 each contribute to the Mn(2+) site. Residues 392–520 form a regulatory domain region; it reads RLDYFSVQSG…RLQQNNQEMV (129 aa).

The protein belongs to the alpha-IPM synthase/homocitrate synthase family. LeuA type 1 subfamily. Homodimer. Requires Mn(2+) as cofactor.

The protein localises to the cytoplasm. The catalysed reaction is 3-methyl-2-oxobutanoate + acetyl-CoA + H2O = (2S)-2-isopropylmalate + CoA + H(+). It functions in the pathway amino-acid biosynthesis; L-leucine biosynthesis; L-leucine from 3-methyl-2-oxobutanoate: step 1/4. Catalyzes the condensation of the acetyl group of acetyl-CoA with 3-methyl-2-oxobutanoate (2-ketoisovalerate) to form 3-carboxy-3-hydroxy-4-methylpentanoate (2-isopropylmalate). This Yersinia pseudotuberculosis serotype O:1b (strain IP 31758) protein is 2-isopropylmalate synthase.